Consider the following 245-residue polypeptide: 7-cyano-7-deazaguanine synthase (245 aa).

19–29 (FSGGQDSATCL) is a binding site for ATP. Zn(2+) contacts are provided by cysteine 207, cysteine 222, cysteine 225, and cysteine 228.

It belongs to the QueC family. Requires Zn(2+) as cofactor.

It carries out the reaction 7-carboxy-7-deazaguanine + NH4(+) + ATP = 7-cyano-7-deazaguanine + ADP + phosphate + H2O + H(+). It functions in the pathway purine metabolism; 7-cyano-7-deazaguanine biosynthesis. In terms of biological role, catalyzes the ATP-dependent conversion of 7-carboxy-7-deazaguanine (CDG) to 7-cyano-7-deazaguanine (preQ(0)). This is 7-cyano-7-deazaguanine synthase from Gluconacetobacter diazotrophicus (strain ATCC 49037 / DSM 5601 / CCUG 37298 / CIP 103539 / LMG 7603 / PAl5).